Consider the following 340-residue polypeptide: Lipopolysaccharide core biosynthesis glycosyltransferase LpsE (340 aa).

This sequence belongs to the glycosyltransferase group 1 family. Glycosyltransferase 4 subfamily.

Its pathway is bacterial outer membrane biogenesis; LPS core biosynthesis. The chain is Lipopolysaccharide core biosynthesis glycosyltransferase LpsE (lpsE) from Rhizobium meliloti (strain 1021) (Ensifer meliloti).